The following is a 50-amino-acid chain: uncharacterized protein (50 aa).

The segment at 28 to 50 (SKLSPVTNGGKTIGKSNKVSKND) is disordered. Residues 29-50 (KLSPVTNGGKTIGKSNKVSKND) are compositionally biased toward polar residues.

This is an uncharacterized protein from Haemophilus influenzae (strain ATCC 51907 / DSM 11121 / KW20 / Rd).